The chain runs to 121 residues: Ribulose bisphosphate carboxylase small subunit (121 aa).

Belongs to the RuBisCO small chain family. In terms of assembly, heterohexadecamer of 8 large and 8 small subunits.

Functionally, ruBisCO catalyzes two reactions: the carboxylation of D-ribulose 1,5-bisphosphate, the primary event in carbon dioxide fixation, as well as the oxidative fragmentation of the pentose substrate. Both reactions occur simultaneously and in competition at the same active site. Although the small subunit is not catalytic it is essential for maximal activity. The sequence is that of Ribulose bisphosphate carboxylase small subunit from Alvinoconcha hessleri symbiotic bacterium.